Reading from the N-terminus, the 209-residue chain is Uracil phosphoribosyltransferase (209 aa).

5-phospho-alpha-D-ribose 1-diphosphate contacts are provided by residues Arg79, Arg104, and 131-139 (DPMLATGGS). Uracil contacts are provided by residues Ile194 and 199-201 (GDA). Asp200 serves as a coordination point for 5-phospho-alpha-D-ribose 1-diphosphate.

Belongs to the UPRTase family. It depends on Mg(2+) as a cofactor.

It carries out the reaction UMP + diphosphate = 5-phospho-alpha-D-ribose 1-diphosphate + uracil. The protein operates within pyrimidine metabolism; UMP biosynthesis via salvage pathway; UMP from uracil: step 1/1. Allosterically activated by GTP. Catalyzes the conversion of uracil and 5-phospho-alpha-D-ribose 1-diphosphate (PRPP) to UMP and diphosphate. This chain is Uracil phosphoribosyltransferase, found in Latilactobacillus sakei (Lactobacillus sakei).